The primary structure comprises 358 residues: MSKKCVVVAGGTGGHIFPGIAVADYLKQQGWQVSWIGTPDRMEATVVPKHNIDINFINVKGVRGNGIKRLIKAPFMVLNAILQARKVLKSEKPDVVLAMGGYVTGPTGIAAKSLGIPLVIHEQNAIAGMSNKWLAKFANRVLAAFPSAFATGQAELVGNPVRESVANIAVREVSSPINILVVGGSLGAQVLNTTLPAAFAELGNTNAISVWHQTGKGHLGSVEAAYKSHKFSTENTKVAEFIDDIDTAYGWADIVICRSGALTVSEIATAGKMAVFVPFPHAVDDHQTANAQYLVVANGALLMPQGQFNQQSIVALLSPYLAKPSLIKEMAANAKQQAILDATASVAMHCEQVTNKRA.

Residues 12 to 14, asparagine 124, arginine 162, serine 185, isoleucine 242, 261 to 266, and glutamine 287 each bind UDP-N-acetyl-alpha-D-glucosamine; these read TGG and ALTVSE.

This sequence belongs to the glycosyltransferase 28 family. MurG subfamily.

It is found in the cell inner membrane. It catalyses the reaction di-trans,octa-cis-undecaprenyl diphospho-N-acetyl-alpha-D-muramoyl-L-alanyl-D-glutamyl-meso-2,6-diaminopimeloyl-D-alanyl-D-alanine + UDP-N-acetyl-alpha-D-glucosamine = di-trans,octa-cis-undecaprenyl diphospho-[N-acetyl-alpha-D-glucosaminyl-(1-&gt;4)]-N-acetyl-alpha-D-muramoyl-L-alanyl-D-glutamyl-meso-2,6-diaminopimeloyl-D-alanyl-D-alanine + UDP + H(+). It participates in cell wall biogenesis; peptidoglycan biosynthesis. Functionally, cell wall formation. Catalyzes the transfer of a GlcNAc subunit on undecaprenyl-pyrophosphoryl-MurNAc-pentapeptide (lipid intermediate I) to form undecaprenyl-pyrophosphoryl-MurNAc-(pentapeptide)GlcNAc (lipid intermediate II). This Pseudoalteromonas translucida (strain TAC 125) protein is UDP-N-acetylglucosamine--N-acetylmuramyl-(pentapeptide) pyrophosphoryl-undecaprenol N-acetylglucosamine transferase.